The primary structure comprises 344 residues: Phosphoribosylformylglycinamidine cyclo-ligase (344 aa).

This sequence belongs to the AIR synthase family.

The protein localises to the cytoplasm. It catalyses the reaction 2-formamido-N(1)-(5-O-phospho-beta-D-ribosyl)acetamidine + ATP = 5-amino-1-(5-phospho-beta-D-ribosyl)imidazole + ADP + phosphate + H(+). The protein operates within purine metabolism; IMP biosynthesis via de novo pathway; 5-amino-1-(5-phospho-D-ribosyl)imidazole from N(2)-formyl-N(1)-(5-phospho-D-ribosyl)glycinamide: step 2/2. The sequence is that of Phosphoribosylformylglycinamidine cyclo-ligase from Haemophilus influenzae (strain PittEE).